Here is a 370-residue protein sequence, read N- to C-terminus: Protein RKD5 (370 aa).

Positions 193–232 (DSETESEESVNEKTEHSEFENDKTEQSESDAKTEILKKKK) are disordered. Residues 202–228 (VNEKTEHSEFENDKTEQSESDAKTEIL) are compositionally biased toward basic and acidic residues. Residues 224–309 (KTEILKKKKR…AEKQQEKNEA (86 aa)) form the RWP-RK domain. Residues 283–328 (HRKIKSLDCLIHDLQREAEKQQEKNEAAAMAVAKKQEKLETEKRNI) are a coiled coil. The tract at residues 347–370 (NFKKRHRASRAKKNQESLVTSSST) is disordered. The span at 349–358 (KKRHRASRAK) shows a compositional bias: basic residues.

It is found in the nucleus. Putative transcription factor. The polypeptide is Protein RKD5 (RKD5) (Arabidopsis thaliana (Mouse-ear cress)).